The following is a 1004-amino-acid chain: Caspase recruitment domain-containing protein 14 (1004 aa).

The CARD domain occupies 15 to 107 (DEETLWEMME…DVYTLVTGLQ (93 aa)). Residues 128–409 (LAGAIGSLQE…RTQLRQLQAE (282 aa)) adopt a coiled-coil conformation. A maintains the protein in an inactive state region spans residues 409 to 568 (EPPGVLKQEA…RRPARRILSQ (160 aa)). Serine 544 carries the phosphoserine modification. One can recognise a PDZ domain in the interval 568–658 (QVTMLAFQGD…FCCLSVKVNT (91 aa)). In terms of domain architecture, Guanylate kinase-like spans 807–990 (AESCLTLVPY…LLSCVRQAIA (184 aa)).

Interacts (via CARD domain) with BCL10 (via CARD domain). Forms a complex with MALT1 and BCL10; resulting in the formation of a CBM (CARD14-BLC10-MALT1) complex. Interacts with TRAF2, TRAF3 and TRAF6. As to expression, isoform 1 is detected in placenta and epidermal keratinocytes. Isoform 2 is detected in leukocytes and fetal brain.

It localises to the cytoplasm. Functionally, acts as a scaffolding protein that can activate the inflammatory transcription factor NF-kappa-B and p38/JNK MAP kinase signaling pathways. Forms a signaling complex with BCL10 and MALT1, and activates MALT1 proteolytic activity and inflammatory gene expression. MALT1 is indispensable for CARD14-induced activation of NF-kappa-B and p38/JNK MAP kinases. May play a role in signaling mediated by TRAF2, TRAF3 and TRAF6 and protects cells against apoptosis. Not able to activate the inflammatory transcription factor NF-kappa-B and may function as a dominant negative regulator. This is Caspase recruitment domain-containing protein 14 (CARD14) from Homo sapiens (Human).